The chain runs to 177 residues: 3-hydroxyanthranilate 3,4-dioxygenase (177 aa).

Arginine 47 is a binding site for O2. 3 residues coordinate Fe cation: histidine 51, glutamate 57, and histidine 95. Glutamate 57 is a binding site for substrate. Substrate-binding residues include arginine 99 and glutamate 110. Residues cysteine 125, cysteine 128, cysteine 162, and cysteine 165 each coordinate Fe cation.

This sequence belongs to the 3-HAO family. Homodimer. Requires Fe(2+) as cofactor.

The catalysed reaction is 3-hydroxyanthranilate + O2 = (2Z,4Z)-2-amino-3-carboxymuconate 6-semialdehyde. The protein operates within cofactor biosynthesis; NAD(+) biosynthesis; quinolinate from L-kynurenine: step 3/3. Catalyzes the oxidative ring opening of 3-hydroxyanthranilate to 2-amino-3-carboxymuconate semialdehyde, which spontaneously cyclizes to quinolinate. In Burkholderia cenocepacia (strain ATCC BAA-245 / DSM 16553 / LMG 16656 / NCTC 13227 / J2315 / CF5610) (Burkholderia cepacia (strain J2315)), this protein is 3-hydroxyanthranilate 3,4-dioxygenase.